Reading from the N-terminus, the 83-residue chain is Cytochrome b559 subunit alpha (83 aa).

Residues 21–35 (VIHSITIPSLFIAGW) traverse the membrane as a helical segment. Position 23 (histidine 23) interacts with heme.

This sequence belongs to the PsbE/PsbF family. Heterodimer of an alpha subunit and a beta subunit. PSII is composed of 1 copy each of membrane proteins PsbA, PsbB, PsbC, PsbD, PsbE, PsbF, PsbH, PsbI, PsbJ, PsbK, PsbL, PsbM, PsbT, PsbX, PsbY, PsbZ, Psb30/Ycf12, at least 3 peripheral proteins of the oxygen-evolving complex and a large number of cofactors. It forms dimeric complexes. Heme b is required as a cofactor.

It localises to the plastid. Its subcellular location is the chloroplast thylakoid membrane. In terms of biological role, this b-type cytochrome is tightly associated with the reaction center of photosystem II (PSII). PSII is a light-driven water:plastoquinone oxidoreductase that uses light energy to abstract electrons from H(2)O, generating O(2) and a proton gradient subsequently used for ATP formation. It consists of a core antenna complex that captures photons, and an electron transfer chain that converts photonic excitation into a charge separation. In Psilotum nudum (Whisk fern), this protein is Cytochrome b559 subunit alpha.